A 195-amino-acid chain; its full sequence is Imidazoleglycerol-phosphate dehydratase (195 aa).

This sequence belongs to the imidazoleglycerol-phosphate dehydratase family.

Its subcellular location is the cytoplasm. It catalyses the reaction D-erythro-1-(imidazol-4-yl)glycerol 3-phosphate = 3-(imidazol-4-yl)-2-oxopropyl phosphate + H2O. Its pathway is amino-acid biosynthesis; L-histidine biosynthesis; L-histidine from 5-phospho-alpha-D-ribose 1-diphosphate: step 6/9. The protein is Imidazoleglycerol-phosphate dehydratase of Hydrogenovibrio crunogenus (strain DSM 25203 / XCL-2) (Thiomicrospira crunogena).